The primary structure comprises 74 residues: Porwaprin-a (74 aa).

Residues 1–24 (MSSGGLLLLLGLLTLWEVLTPVSS) form the signal peptide. Positions 27 to 71 (RPKKLGLCPPRPQKPCVKECKNDWSCPGQQKCCNYGCIDECRDPI) constitute a WAP domain. 4 cysteine pairs are disulfide-bonded: C34-C59, C42-C63, C46-C58, and C52-C67.

It belongs to the venom waprin family. As to expression, expressed by the venom gland.

Its subcellular location is the secreted. Damages membranes of susceptible bacteria. Has no hemolytic activity. Not toxic to mice. Does not inhibit the proteinases elastase and cathepsin G. In Pseudechis porphyriacus (Red-bellied black snake), this protein is Porwaprin-a.